The following is a 457-amino-acid chain: Acetylcholine receptor subunit alpha (457 aa).

An N-terminal signal peptide occupies residues 1–20 (MELSTVLLLLGLCSAGLVLG). Residues 21–230 (SEHETRLVAK…ITYHFVMQRL (210 aa)) lie on the Extracellular side of the membrane. 2 disulfide bridges follow: cysteine 148-cysteine 162 and cysteine 212-cysteine 213. A glycan (N-linked (GlcNAc...) asparagine) is linked at asparagine 161. 3 helical membrane passes run 231–255 (PLYFIVNVIIPCLLFSFLTSLVFYL), 263–281 (MTLSISVLLSLTVFLLVIV), and 297–316 (YMLFTMVFVIASIIITVIVI). Topologically, residues 317–428 (NTHHRSPSTH…WKYVAMVMDH (112 aa)) are cytoplasmic. A helical transmembrane segment spans residues 429 to 447 (ILLGVFMLVCLIGTLAVFA).

This sequence belongs to the ligand-gated ion channel (TC 1.A.9) family. Acetylcholine receptor (TC 1.A.9.1) subfamily. Alpha-1/CHRNA1 sub-subfamily. As to quaternary structure, one of the alpha chains that assemble within the acetylcholine receptor, a pentamer of two alpha chains, a beta, a delta, and a gamma (in immature muscle) or epsilon (in mature muscle) chains. The muscle heteropentamer composed of alpha-1, beta-1, delta, epsilon subunits interacts with the alpha-conotoxin ImII.

The protein resides in the postsynaptic cell membrane. It localises to the cell membrane. The enzyme catalyses K(+)(in) = K(+)(out). It carries out the reaction Na(+)(in) = Na(+)(out). Its function is as follows. Upon acetylcholine binding, the AChR responds by an extensive change in conformation that affects all subunits and leads to opening of an ion-conducting channel across the plasma membrane. In Mus musculus (Mouse), this protein is Acetylcholine receptor subunit alpha (Chrna1).